Reading from the N-terminus, the 469-residue chain is Sulfate adenylyltransferase subunit 1 (469 aa).

The region spanning 22 to 238 (KQLLRFITCG…LETIKIDEDR (217 aa)) is the tr-type G domain. A G1 region spans residues 31–38 (GSVDDGKS). 31–38 (GSVDDGKS) contacts GTP. Residues 89-93 (GITID) are G2. Residues 110-113 (DTPG) form a G3 region. GTP is bound by residues 110–114 (DTPGH) and 165–168 (NKMD). Positions 165 to 168 (NKMD) are G4. Residues 203–205 (SAL) are G5.

Belongs to the TRAFAC class translation factor GTPase superfamily. Classic translation factor GTPase family. CysN/NodQ subfamily. As to quaternary structure, heterodimer composed of CysD, the smaller subunit, and CysN.

The enzyme catalyses sulfate + ATP + H(+) = adenosine 5'-phosphosulfate + diphosphate. It participates in sulfur metabolism; hydrogen sulfide biosynthesis; sulfite from sulfate: step 1/3. In terms of biological role, with CysD forms the ATP sulfurylase (ATPS) that catalyzes the adenylation of sulfate producing adenosine 5'-phosphosulfate (APS) and diphosphate, the first enzymatic step in sulfur assimilation pathway. APS synthesis involves the formation of a high-energy phosphoric-sulfuric acid anhydride bond driven by GTP hydrolysis by CysN coupled to ATP hydrolysis by CysD. This Aliarcobacter butzleri (strain RM4018) (Arcobacter butzleri) protein is Sulfate adenylyltransferase subunit 1.